Consider the following 284-residue polypeptide: NH(3)-dependent NAD(+) synthetase (284 aa).

51 to 58 (GISGGIDS) contributes to the ATP binding site. Position 57 (D57) interacts with Mg(2+). A deamido-NAD(+)-binding site is contributed by R148. T168 contacts ATP. E173 contacts Mg(2+). Deamido-NAD(+) contacts are provided by K181 and D188. K197 and T219 together coordinate ATP. Position 268-269 (268-269 (HK)) interacts with deamido-NAD(+).

It belongs to the NAD synthetase family. Homodimer.

It carries out the reaction deamido-NAD(+) + NH4(+) + ATP = AMP + diphosphate + NAD(+) + H(+). It functions in the pathway cofactor biosynthesis; NAD(+) biosynthesis; NAD(+) from deamido-NAD(+) (ammonia route): step 1/1. In terms of biological role, catalyzes the ATP-dependent amidation of deamido-NAD to form NAD. Uses ammonia as a nitrogen source. The sequence is that of NH(3)-dependent NAD(+) synthetase from Burkholderia mallei (strain NCTC 10247).